A 172-amino-acid chain; its full sequence is Large ribosomal subunit protein uL10 (172 aa).

The protein belongs to the universal ribosomal protein uL10 family. In terms of assembly, part of the ribosomal stalk of the 50S ribosomal subunit. The N-terminus interacts with L11 and the large rRNA to form the base of the stalk. The C-terminus forms an elongated spine to which L12 dimers bind in a sequential fashion forming a multimeric L10(L12)X complex.

Its function is as follows. Forms part of the ribosomal stalk, playing a central role in the interaction of the ribosome with GTP-bound translation factors. This chain is Large ribosomal subunit protein uL10, found in Francisella tularensis subsp. mediasiatica (strain FSC147).